We begin with the raw amino-acid sequence, 1313 residues long: Inter-alpha-trypsin inhibitor heavy chain H6 (1313 aa).

The N-terminal stretch at 1 to 23 (MSGWRYLICVSFLLTILLELTYQ) is a signal peptide. In terms of domain architecture, VIT spans 24 to 150 (GPPVPASSST…EVTFSLAYEE (127 aa)). N83, N374, N540, and N594 each carry an N-linked (GlcNAc...) asparagine glycan. The region spanning 283-469 (NVVFVIDVSS…LQLKGLYEEI (187 aa)) is the VWFA domain. Disordered regions lie at residues 612–644 (QPKQASEETRRQTSTSAGPDTIMPSSSSRHGLG), 783–817 (HSKPGAPSHPQLGALTSQAPKGLPQSRPGVSTLQV), 856–928 (LKPS…EPLP), and 959–983 (PSRPGVPTMSLLNSSRPTPEGSPPN). Residues 623-640 (QTSTSAGPDTIMPSSSSR) are compositionally biased toward polar residues. Residues 864–875 (QISTSISLSKPE) show a composition bias toward polar residues. Over residues 876–888 (TPNPHMPQTPLPP) the composition is skewed to pro residues. Residues 907–921 (TISSSTGPSSTTTTS) show a composition bias toward low complexity. N-linked (GlcNAc...) asparagine glycosylation is found at N971 and N1231.

This sequence belongs to the ITIH family.

It localises to the secreted. This Homo sapiens (Human) protein is Inter-alpha-trypsin inhibitor heavy chain H6 (ITIH6).